An 83-amino-acid chain; its full sequence is Small ribosomal subunit protein bS16 (83 aa).

The protein belongs to the bacterial ribosomal protein bS16 family.

In Pseudoalteromonas atlantica (strain T6c / ATCC BAA-1087), this protein is Small ribosomal subunit protein bS16.